A 116-amino-acid polypeptide reads, in one-letter code: Small ribosomal subunit protein uS13m (116 aa).

This sequence belongs to the universal ribosomal protein uS13 family. Part of the small ribosomal subunit.

The protein resides in the mitochondrion. In terms of biological role, located at the top of the head of the small subunit, it contacts several helices of the 18S rRNA. The sequence is that of Small ribosomal subunit protein uS13m (RPS13) from Nicotiana tabacum (Common tobacco).